Here is a 322-residue protein sequence, read N- to C-terminus: Germ cell-specific gene 1-like protein (322 aa).

The Cytoplasmic segment spans residues 1-8 (MKTSRRGR). A helical membrane pass occupies residues 9–29 (ALLAVALNLLALLFATTAFLT). Over 30–122 (TYWCQGTQRV…FIDLAPASEK (93 aa)) the chain is Extracellular. The helical transmembrane segment at 123–143 (GVLWLSVVSEVLYILLLVVGF) threads the bilayer. Residues 144–163 (SLMCLELLHSSSVIDGLKLN) lie on the Cytoplasmic side of the membrane. Residues 164 to 184 (AFAAVFTVLSGLLGMVAHMMY) form a helical membrane-spanning segment. At 185 to 207 (TQVFQVTVSLGPEDWRPHSWDYG) the chain is on the extracellular side. The helical transmembrane segment at 208–228 (WSFCLAWGSFTCCMAASVTTL) threads the bilayer. The Cytoplasmic portion of the chain corresponds to 229–322 (NSYTKTVIEF…RQCWVLGHWV (94 aa)). The residue at position 274 (serine 274) is a Phosphoserine.

The protein belongs to the GSG1 family. In terms of assembly, component of the inner core of AMPAR complexes. AMPAR complexes consist of an inner core made of 4 pore-forming GluA/GRIA proteins (GRIA1, GRIA2, GRIA3 and GRIA4) and 4 major auxiliary subunits arranged in a twofold symmetry. One of the two pairs of distinct binding sites is occupied either by CNIH2, CNIH3 or CACNG2, CACNG3. The other harbors CACNG2, CACNG3, CACNG4, CACNG8 or GSG1L. This inner core of AMPAR complexes is complemented by outer core constituents binding directly to the GluA/GRIA proteins at sites distinct from the interaction sites of the inner core constituents. Outer core constituents include at least PRRT1, PRRT2, CKAMP44/SHISA9, FRRS1L and NRN1. The proteins of the inner and outer core serve as a platform for other, more peripherally associated AMPAR constituents. Alone or in combination, these auxiliary subunits control the gating and pharmacology of the AMPAR complexes and profoundly impact their biogenesis and protein processing. Expressed in the brain (at protein level).

The protein resides in the cell membrane. It localises to the synapse. Its function is as follows. As a component of the inner core of AMPAR complexes, modifies AMPA receptor (AMPAR) gating. In Rattus norvegicus (Rat), this protein is Germ cell-specific gene 1-like protein (Gsg1l).